Consider the following 88-residue polypeptide: Small ribosomal subunit protein uS15 (88 aa).

This sequence belongs to the universal ribosomal protein uS15 family. Part of the 30S ribosomal subunit. Forms a bridge to the 50S subunit in the 70S ribosome, contacting the 23S rRNA.

Its function is as follows. One of the primary rRNA binding proteins, it binds directly to 16S rRNA where it helps nucleate assembly of the platform of the 30S subunit by binding and bridging several RNA helices of the 16S rRNA. Functionally, forms an intersubunit bridge (bridge B4) with the 23S rRNA of the 50S subunit in the ribosome. This is Small ribosomal subunit protein uS15 from Psychrobacter arcticus (strain DSM 17307 / VKM B-2377 / 273-4).